The primary structure comprises 239 residues: Uridylate kinase (239 aa).

Residue 10–13 coordinates ATP; the sequence is KLSG. Residue G52 coordinates UMP. G53 and R57 together coordinate ATP. UMP contacts are provided by residues D72 and 133 to 140; that span reads TGNPFFTT. T160, Y166, and D169 together coordinate ATP.

It belongs to the UMP kinase family. In terms of assembly, homohexamer.

It localises to the cytoplasm. It carries out the reaction UMP + ATP = UDP + ADP. It functions in the pathway pyrimidine metabolism; CTP biosynthesis via de novo pathway; UDP from UMP (UMPK route): step 1/1. Inhibited by UTP. Its function is as follows. Catalyzes the reversible phosphorylation of UMP to UDP. This chain is Uridylate kinase, found in Porphyromonas gingivalis (strain ATCC BAA-308 / W83).